The sequence spans 47 residues: Packaging protein P22 (47 aa).

The chain crosses the membrane as a helical span at residues 22–42 (TGWLAFVGLIIVAIILWQQII).

Heterodimer of P20 and P22; further multimerizes as hexamers of heterodimers. Part of the dodecameric portal complex that is composed of the packaging efficiency factor P6, the DNA packaging ATPase P9, and the internal heterododecamer P20/P22 which spans the virion inner membrane.

Its subcellular location is the virion membrane. Together with P22, forms the internal part of the portal complex embeded in the virion internal membrane and which plays critical roles in genome packaging and genome ejection. Both proteins multimerize as a single ring-shaped heterdodecamer arranged around a central channel and interact with the P6/P9 external part of the portal. In Enterobacteria phage PRD1 (Bacteriophage PRD1), this protein is Packaging protein P22 (XXII).